Here is an 82-residue protein sequence, read N- to C-terminus: EMBRYO SURROUNDING FACTOR 1.2 (82 aa).

Residues 1-23 (MKSQTVLISIFIFSFFALHQCMQ) form the signal peptide. Cystine bridges form between C40/C56, C45/C77, C54/C71, and C57/C64.

The protein belongs to the MEG family. Expressed exclusively in ovule embryo sacs and in early developing endosperms.

Maternally-contributed central cell peptide regulating suspensor development and correct auxin distribution in early developing embryos. In Arabidopsis thaliana (Mouse-ear cress), this protein is EMBRYO SURROUNDING FACTOR 1.2 (ESF1.2).